We begin with the raw amino-acid sequence, 119 residues long: Translation initiation factor 1A (119 aa).

Residues 1-24 (MSEDDVDNSVKDFESGEENEESIG) are disordered. Residues 24–98 (GRVILPNKKK…EKADVVYRYT (75 aa)) form the S1-like domain.

This sequence belongs to the eIF-1A family.

Its function is as follows. Seems to be required for maximal rate of protein biosynthesis. Enhances ribosome dissociation into subunits and stabilizes the binding of the initiator Met-tRNA(I) to 40 S ribosomal subunits. This chain is Translation initiation factor 1A (eIF1A), found in Thermoplasma acidophilum (strain ATCC 25905 / DSM 1728 / JCM 9062 / NBRC 15155 / AMRC-C165).